A 201-amino-acid chain; its full sequence is Small ribosomal subunit protein uS4c (201 aa).

The disordered stretch occupies residues 17–44; sequence ALPGLTNKKPRTGSDLRNQSRSGKKSQY. The S4 RNA-binding domain maps to 89-149; that stretch reads MRLDNILFRL…DEQKSRALIQ (61 aa).

This sequence belongs to the universal ribosomal protein uS4 family. In terms of assembly, part of the 30S ribosomal subunit. Contacts protein S5. The interaction surface between S4 and S5 is involved in control of translational fidelity.

The protein localises to the plastid. Its subcellular location is the chloroplast. One of the primary rRNA binding proteins, it binds directly to 16S rRNA where it nucleates assembly of the body of the 30S subunit. Its function is as follows. With S5 and S12 plays an important role in translational accuracy. The protein is Small ribosomal subunit protein uS4c (rps4) of Atropa belladonna (Belladonna).